An 89-amino-acid chain; its full sequence is Small ribosomal subunit protein uS17 (89 aa).

Belongs to the universal ribosomal protein uS17 family. As to quaternary structure, part of the 30S ribosomal subunit.

One of the primary rRNA binding proteins, it binds specifically to the 5'-end of 16S ribosomal RNA. The chain is Small ribosomal subunit protein uS17 from Phytoplasma mali (strain AT).